The sequence spans 175 residues: Sec-independent protein translocase protein TatB (175 aa).

The chain crosses the membrane as a helical span at residues 1–21; the sequence is MLDLGLSKMALIGVVALVVLG. Low complexity predominate over residues 94-115; sequence SAVSPGGSAAADAPDGPSAASG. Disordered regions lie at residues 94–118 and 153–175; these read SAVS…GEPS and VQSG…ARFL. Residues 160–175 are compositionally biased toward basic residues; the sequence is VARHRPASLRRPARFL.

It belongs to the TatB family. As to quaternary structure, the Tat system comprises two distinct complexes: a TatABC complex, containing multiple copies of TatA, TatB and TatC subunits, and a separate TatA complex, containing only TatA subunits. Substrates initially bind to the TatABC complex, which probably triggers association of the separate TatA complex to form the active translocon.

It is found in the cell inner membrane. In terms of biological role, part of the twin-arginine translocation (Tat) system that transports large folded proteins containing a characteristic twin-arginine motif in their signal peptide across membranes. Together with TatC, TatB is part of a receptor directly interacting with Tat signal peptides. TatB may form an oligomeric binding site that transiently accommodates folded Tat precursor proteins before their translocation. This Burkholderia pseudomallei (strain 1106a) protein is Sec-independent protein translocase protein TatB.